Here is a 188-residue protein sequence, read N- to C-terminus: Photosystem I assembly protein Ycf4 (188 aa).

The next 2 membrane-spanning stretches (helical) occupy residues 26–46 (YFWA…GLSS) and 68–88 (LVMG…WFVI).

The protein belongs to the Ycf4 family.

The protein resides in the cellular thylakoid membrane. Its function is as follows. Seems to be required for the assembly of the photosystem I complex. This chain is Photosystem I assembly protein Ycf4, found in Synechococcus sp. (strain ATCC 27144 / PCC 6301 / SAUG 1402/1) (Anacystis nidulans).